Reading from the N-terminus, the 305-residue chain is Ribonuclease H (305 aa).

It catalyses the reaction Endonucleolytic cleavage to 5'-phosphomonoester.. Its function is as follows. Plays essential roles in DNA replication by removing the RNA primers from lagging strand fragments. Exhibits 5'to 3' exonuclease activity on either RNA/DNA or DNA/DNA duplexes and endonuclease activity on either flap or fork DNA structures. This is Ribonuclease H (rnh) from Enterobacteria phage T4 (Bacteriophage T4).